The sequence spans 184 residues: Ribosome-recycling factor (184 aa).

Residues 134–167 are disordered; the sequence is MNDQLKKDEKNGDITEDELRSGTEDVQKATDNSI.

Belongs to the RRF family.

It is found in the cytoplasm. Its function is as follows. Responsible for the release of ribosomes from messenger RNA at the termination of protein biosynthesis. May increase the efficiency of translation by recycling ribosomes from one round of translation to another. This is Ribosome-recycling factor from Staphylococcus aureus (strain Mu3 / ATCC 700698).